The chain runs to 353 residues: Cyclin-dependent kinase-like 1 (353 aa).

Positions 4–286 (YDRLSKLGEG…CSELMLHGIF (283 aa)) constitute a Protein kinase domain. Residues 10–18 (LGEGSYGVV) and Lys33 each bind ATP. The active-site Proton acceptor is Asp126. The interval 331 to 353 (GGNHGNNNNNGNGINRNFLPTIS) is disordered. Over residues 335–347 (GNNNNNGNGINRN) the composition is skewed to low complexity.

It belongs to the protein kinase superfamily. Ser/Thr protein kinase family. In terms of tissue distribution, specifically expressed in head and tail ciliated sensory neurons.

It localises to the cell projection. Its subcellular location is the cilium. It carries out the reaction L-seryl-[protein] + ATP = O-phospho-L-seryl-[protein] + ADP + H(+). The catalysed reaction is L-threonyl-[protein] + ATP = O-phospho-L-threonyl-[protein] + ADP + H(+). Modulates cilium assembly. In Caenorhabditis elegans, this protein is Cyclin-dependent kinase-like 1.